Here is a 260-residue protein sequence, read N- to C-terminus: Putative nudix hydrolase 6 (260 aa).

The Nudix hydrolase domain maps to 113 to 257; it reads PNHAADPIVS…SHFIDLLKES (145 aa). A Nudix box motif is present at residues 148–170; sequence GMVDAGEHVSQTLRREFAEEAMH. Mg(2+) is bound by residues glutamate 163 and glutamate 167.

The protein belongs to the Nudix hydrolase family. Mg(2+) is required as a cofactor. Mn(2+) serves as cofactor.

Probably mediates the hydrolysis of some nucleoside diphosphate derivatives. The polypeptide is Putative nudix hydrolase 6 (ndx-6) (Caenorhabditis elegans).